A 203-amino-acid polypeptide reads, in one-letter code: METLSQDSLLECQICFNYYSPRRRPKLLDCKHTCCSVCLQQMRTSQKDLRCPWCRGITKLPPGYSVSQLPDDPEVIAVIAIPHTSEHTPVFIKLPSNGCYMLPLPLSKERAMLPGDIGCRLLPGSQQKSLAVVTIPAEQQPLQGGLPAEAGAEEPDRRGVVKSSTWSGVCTVILVACVLVFLLGIVLHNMSCISKRFTVISCG.

The RING-type zinc finger occupies 12–55 (CQICFNYYSPRRRPKLLDCKHTCCSVCLQQMRTSQKDLRCPWCR). Residues 167–187 (SGVCTVILVACVLVFLLGIVL) form a helical membrane-spanning segment.

This sequence belongs to the RNF152 family.

It localises to the lysosome membrane. It catalyses the reaction S-ubiquitinyl-[E2 ubiquitin-conjugating enzyme]-L-cysteine + [acceptor protein]-L-lysine = [E2 ubiquitin-conjugating enzyme]-L-cysteine + N(6)-ubiquitinyl-[acceptor protein]-L-lysine.. The protein operates within protein modification; protein ubiquitination. E3 ubiquitin-protein ligase that acts as a negative regulator of mTORC1 signaling by mediating ubiquitination of RagA/RRAGA and RHEB. Catalyzes 'Lys-63'-linked polyubiquitination of RagA/RRAGA in response to amino acid starvation, thereby regulating mTORC1 signaling. Also mediates monoubiquitination of RHEB, promoting its association with the TSC-TBC complex and subsequent inhibition. Also mediates 'Lys-48'-linked polyubiquitination of target proteins and their subsequent targeting to the proteasome for degradation. This chain is E3 ubiquitin-protein ligase RNF152, found in Gallus gallus (Chicken).